The sequence spans 235 residues: Coiled-coil domain-containing protein 71L (235 aa).

The span at 1 to 13 shows a compositional bias: basic residues; the sequence is MRRSMKRRRRRRP. The disordered stretch occupies residues 1-30; that stretch reads MRRSMKRRRRRRPVAPATAARGGDFRAEDG. A phosphoserine mark is found at Ser52 and Ser89. The tract at residues 109–167 is disordered; the sequence is PDPPGPPTARGQARRPVPRAAARRRRRGARAAAARRRKPRPPPPPPPPPEESCPAKPVA. Over residues 120–148 the composition is skewed to basic residues; the sequence is QARRPVPRAAARRRRRGARAAAARRRKPR. Pro residues predominate over residues 149 to 159; that stretch reads PPPPPPPPPEE. Residue Thr185 is modified to Phosphothreonine. The residue at position 198 (Ser198) is a Phosphoserine.

The sequence is that of Coiled-coil domain-containing protein 71L (CCDC71L) from Homo sapiens (Human).